Here is a 174-residue protein sequence, read N- to C-terminus: Glycine-rich protein 5 (174 aa).

Positions 1–22 (MASKSLFLVALLVGSFAFTSFA) are cleaved as a signal peptide.

In terms of tissue distribution, mostly expressed in immature seed pods, and, to a lower extent, in stems and leaves. Present in phloem and epiderm in leaves, stems, flowers and fruits.

The protein localises to the vacuole. In terms of biological role, involved in organ growth by promoting cell elongation processes. The protein is Glycine-rich protein 5 of Arabidopsis thaliana (Mouse-ear cress).